Here is a 154-residue protein sequence, read N- to C-terminus: MHCPFCGANDTKVIDSRLVAEGEQVRRRRECLACGERFTTFETAELVLPRLIKQDGSRQPFDEEKLRAGMQRALEKRPVSVERLEAALVHIKHKLRATGEREVKSLVVGELVMTELQKLDEVAYIRFASVYRRFQDLNEFREEIDRLAREPGKE.

The segment at 3–34 is a zinc-finger region; that stretch reads CPFCGANDTKVIDSRLVAEGEQVRRRRECLAC. The 91-residue stretch at 49-139 folds into the ATP-cone domain; the sequence is PRLIKQDGSR…VYRRFQDLNE (91 aa).

The protein belongs to the NrdR family. The cofactor is Zn(2+).

Functionally, negatively regulates transcription of bacterial ribonucleotide reductase nrd genes and operons by binding to NrdR-boxes. The protein is Transcriptional repressor NrdR of Pseudomonas syringae pv. syringae (strain B728a).